The chain runs to 124 residues: Fluoride-specific ion channel FluC (124 aa).

Transmembrane regions (helical) follow at residues 4-24 (VLYI…ISIL), 35-55 (FGTL…YALA), 60-80 (IGPE…TTFS), and 100-120 (LNVL…QQLI). Residues Gly-74 and Thr-77 each coordinate Na(+).

The protein belongs to the fluoride channel Fluc/FEX (TC 1.A.43) family.

It localises to the cell inner membrane. It catalyses the reaction fluoride(in) = fluoride(out). Na(+) is not transported, but it plays an essential structural role and its presence is essential for fluoride channel function. Fluoride-specific ion channel. Important for reducing fluoride concentration in the cell, thus reducing its toxicity. The polypeptide is Fluoride-specific ion channel FluC (Shewanella amazonensis (strain ATCC BAA-1098 / SB2B)).